The chain runs to 256 residues: Hydroxyacylglutathione hydrolase (256 aa).

Positions 54, 56, 58, 59, 113, 136, and 174 each coordinate Zn(2+).

The protein belongs to the metallo-beta-lactamase superfamily. Glyoxalase II family. Monomer. Zn(2+) is required as a cofactor.

It catalyses the reaction an S-(2-hydroxyacyl)glutathione + H2O = a 2-hydroxy carboxylate + glutathione + H(+). It participates in secondary metabolite metabolism; methylglyoxal degradation; (R)-lactate from methylglyoxal: step 2/2. Functionally, thiolesterase that catalyzes the hydrolysis of S-D-lactoyl-glutathione to form glutathione and D-lactic acid. The sequence is that of Hydroxyacylglutathione hydrolase from Cyanothece sp. (strain PCC 7425 / ATCC 29141).